Consider the following 302-residue polypeptide: Oxygen-dependent coproporphyrinogen-III oxidase (302 aa).

Residue Ser-94 participates in substrate binding. A divalent metal cation-binding residues include His-98 and His-108. The active-site Proton donor is the His-108. 110-112 (NVR) is a substrate binding site. Residues His-147 and His-177 each contribute to the a divalent metal cation site. The interval 242–277 (YVEFNLVFDRGTLFGLQSGGRTESILMSMPPVANWR) is important for dimerization. Substrate is bound at residue 260 to 262 (GGR).

Belongs to the aerobic coproporphyrinogen-III oxidase family. As to quaternary structure, homodimer. A divalent metal cation is required as a cofactor.

It localises to the cytoplasm. The catalysed reaction is coproporphyrinogen III + O2 + 2 H(+) = protoporphyrinogen IX + 2 CO2 + 2 H2O. Its pathway is porphyrin-containing compound metabolism; protoporphyrin-IX biosynthesis; protoporphyrinogen-IX from coproporphyrinogen-III (O2 route): step 1/1. In terms of biological role, involved in the heme biosynthesis. Catalyzes the aerobic oxidative decarboxylation of propionate groups of rings A and B of coproporphyrinogen-III to yield the vinyl groups in protoporphyrinogen-IX. In Ralstonia nicotianae (strain ATCC BAA-1114 / GMI1000) (Ralstonia solanacearum), this protein is Oxygen-dependent coproporphyrinogen-III oxidase.